Consider the following 483-residue polypeptide: SWI/SNF-related matrix-associated actin-dependent regulator of chromatin subfamily D member 3 (483 aa).

An N-acetylalanine modification is found at Ala2. The interval 27–102 (RPGMPSGARM…ARSRSAKRRK (76 aa)) is disordered. Low complexity predominate over residues 78-88 (QSQAQGQGQPV). Ser178 carries the phosphoserine modification. The region spanning 258–335 (YQPPQFKLDP…PQRLTALLLP (78 aa)) is the SWIB/MDM2 domain.

The protein belongs to the SMARCD family. As to quaternary structure, component of the multiprotein chromatin-remodeling complexes SWI/SNF: SWI/SNF-A (BAF), SWI/SNF-B (PBAF) and related complexes. The canonical complex contains a catalytic subunit (either SMARCA4/BRG1/BAF190A or SMARCA2/BRM/BAF190B) and at least SMARCE1, ACTL6A/BAF53, SMARCC1/BAF155, SMARCC2/BAF170, and SMARCB1/SNF5/BAF47. Other subunits specific to each of the complexes may also be present permitting several possible combinations developmentally and tissue specific. Component of the BAF complex, which includes at least actin (ACTB), ARID1A/BAF250A, ARID1B/BAF250B, SMARCA2/BRM, SMARCA4/BRG1/BAF190A, ACTL6A/BAF53, ACTL6B/BAF53B, SMARCE1/BAF57, SMARCC1/BAF155, SMARCC2/BAF170, SMARCB1/SNF5/INI1, and one or more SMARCD1/BAF60A, SMARCD2/BAF60B, or SMARCD3/BAF60C. In muscle cells, the BAF complex also contains DPF3. Component of neural progenitors-specific chromatin remodeling complex (npBAF complex) composed of at least, ARID1A/BAF250A or ARID1B/BAF250B, SMARCD1/BAF60A, SMARCD3/BAF60C, SMARCA2/BRM/BAF190B, SMARCA4/BRG1/BAF190A, SMARCB1/BAF47, SMARCC1/BAF155, SMARCE1/BAF57, SMARCC2/BAF170, PHF10/BAF45A, ACTL6A/BAF53A and actin. Component of neuron-specific chromatin remodeling complex (nBAF complex) composed of at least, ARID1A/BAF250A or ARID1B/BAF250B, SMARCD1/BAF60A, SMARCD3/BAF60C, SMARCA2/BRM/BAF190B, SMARCA4/BRG1/BAF190A, SMARCB1/BAF47, SMARCC1/BAF155, SMARCE1/BAF57, SMARCC2/BAF170, DPF1/BAF45B, DPF3/BAF45C, ACTL6B/BAF53B and actin. May be a component of the SWI/SNF-B (PBAF) chromatin remodeling complex, at least composed of SMARCA4/BRG1, SMARCB1/BAF47/SNF5, ACTL6A/BAF53A or ACTL6B/BAF53B, SMARCE1/BAF57, SMARCD1/BAF60A, SMARCD2/BAF60B, perhaps SMARCD3/BAF60C, SMARCC1/BAF155, SMARCC2/BAF170, PBRM1/BAF180, ARID2/BAF200 and actin. Component of SWI/SNF (GBAF) subcomplex, which includes at least BICRA or BICRAL (mutually exclusive), BRD9, SS18, SMARCA2/BRM, SMARCA4/BRG1/BAF190A, ACTL6A/BAF53, SMARCC1/BAF155, and SMARCD1/BAF60A. Interacts with SMARCA4/BRG1/BAF190A. The precise distribution of the related SMARCD1, SMARCD2 and SMARCD3 proteins among these and other SWI/SNF nucleosome-remodeling complexes is not fully known. May allow recruitment of SWI/SNF containing complexes specifically to promoters where these factors are located. Also interacts with several nuclear receptors including PPARG/NR1C3, RXRA/NR1F1, ESR1, NR5A1, NR5A2/LRH1 and other transcriptional activators including the HLH protein SREBF1/SREBP1 and the homeobox protein PBX1. Interacts with PRDM1/BLIMP1. In terms of tissue distribution, ubiquitously expressed.

Its subcellular location is the nucleus. Involved in transcriptional activation and repression of select genes by chromatin remodeling (alteration of DNA-nucleosome topology). Component of SWI/SNF chromatin remodeling complexes that carry out key enzymatic activities, changing chromatin structure by altering DNA-histone contacts within a nucleosome in an ATP-dependent manner. Stimulates nuclear receptor mediated transcription. Belongs to the neural progenitors-specific chromatin remodeling complex (npBAF complex) and the neuron-specific chromatin remodeling complex (nBAF complex). During neural development a switch from a stem/progenitor to a postmitotic chromatin remodeling mechanism occurs as neurons exit the cell cycle and become committed to their adult state. The transition from proliferating neural stem/progenitor cells to postmitotic neurons requires a switch in subunit composition of the npBAF and nBAF complexes. As neural progenitors exit mitosis and differentiate into neurons, npBAF complexes which contain ACTL6A/BAF53A and PHF10/BAF45A, are exchanged for homologous alternative ACTL6B/BAF53B and DPF1/BAF45B or DPF3/BAF45C subunits in neuron-specific complexes (nBAF). The npBAF complex is essential for the self-renewal/proliferative capacity of the multipotent neural stem cells. The nBAF complex along with CREST plays a role regulating the activity of genes essential for dendrite growth. This chain is SWI/SNF-related matrix-associated actin-dependent regulator of chromatin subfamily D member 3 (Smarcd3), found in Mus musculus (Mouse).